The following is a 299-amino-acid chain: Biotin transporter (299 aa).

10 helical membrane-spanning segments follow: residues Ala-2–Leu-22, Val-26–Phe-46, Thr-56–Phe-76, Tyr-81–Ile-101, Leu-110–Tyr-130, Phe-137–Gly-157, Ala-172–Gly-192, Leu-202–Trp-222, Thr-233–Trp-253, and Gln-256–His-276. 2 EamA domains span residues Leu-3–Ile-128 and Val-139–Trp-274.

This sequence belongs to the drug/metabolite transporter (DMT) superfamily. 10 TMS drug/metabolite exporter (DME) (TC 2.A.7.3) family.

Its subcellular location is the cell inner membrane. The catalysed reaction is biotin(in) = biotin(out). Uptake of biotin. In Salmonella typhi, this protein is Biotin transporter.